The following is a 332-amino-acid chain: 2,3-diketo-L-gulonate reductase (332 aa).

His-44 (proton donor) is an active-site residue. NAD(+) contacts are provided by residues 168–174 (ITMVDMS), 224–225 (WK), and 304–306 (GHE).

This sequence belongs to the LDH2/MDH2 oxidoreductase family. DlgD subfamily. Homodimer.

It localises to the cytoplasm. The enzyme catalyses 3-dehydro-L-gulonate + NAD(+) = 2,3-dioxo-L-gulonate + NADH + H(+). It carries out the reaction 3-dehydro-L-gulonate + NADP(+) = 2,3-dioxo-L-gulonate + NADPH + H(+). Its function is as follows. Catalyzes the reduction of 2,3-diketo-L-gulonate in the presence of NADH, to form 3-keto-L-gulonate. The protein is 2,3-diketo-L-gulonate reductase of Klebsiella pneumoniae (strain 342).